A 710-amino-acid polypeptide reads, in one-letter code: Polyribonucleotide nucleotidyltransferase (710 aa).

Mg(2+)-binding residues include aspartate 487 and aspartate 493. One can recognise a KH domain in the interval 554–613 (PRIHTMKISAEKIKDVIGKGGAVIRALTEETGTTIEIEDDGTIKIAATEGAAAKEAIRRI). An S1 motif domain is found at 623 to 691 (GRIYTGKVAR…RQGRVRLSMK (69 aa)). The interval 691 to 710 (KEAVEKPAEEANDASEAKGE) is disordered.

Belongs to the polyribonucleotide nucleotidyltransferase family. In terms of assembly, component of the RNA degradosome, which is a multiprotein complex involved in RNA processing and mRNA degradation. The cofactor is Mg(2+).

The protein localises to the cytoplasm. It carries out the reaction RNA(n+1) + phosphate = RNA(n) + a ribonucleoside 5'-diphosphate. Involved in mRNA degradation. Catalyzes the phosphorolysis of single-stranded polyribonucleotides processively in the 3'- to 5'-direction. The polypeptide is Polyribonucleotide nucleotidyltransferase (Vibrio campbellii (strain ATCC BAA-1116)).